A 45-amino-acid chain; its full sequence is Large ribosomal subunit protein bL34 (45 aa).

The segment covering 1–10 has biased composition (polar residues); sequence MTQRTLGGTN. Residues 1–45 are disordered; it reads MTQRTLGGTNRKQKRTSGFRARMRKSNGRKVIQARRKKGRHRLSV. The segment covering 11–45 has biased composition (basic residues); that stretch reads RKQKRTSGFRARMRKSNGRKVIQARRKKGRHRLSV.

The protein belongs to the bacterial ribosomal protein bL34 family.

In Crocosphaera subtropica (strain ATCC 51142 / BH68) (Cyanothece sp. (strain ATCC 51142)), this protein is Large ribosomal subunit protein bL34.